The chain runs to 222 residues: Noggin (222 aa).

The first 19 residues, 1–19 (MDHSQCLVTIYALMVFLGL), serve as a signal peptide directing secretion. Asn61 carries an N-linked (GlcNAc...) asparagine glycan. 4 disulfides stabilise this stretch: Cys145-Cys182, Cys168-Cys218, Cys174-Cys220, and Cys197-Cys205.

This sequence belongs to the noggin family. In terms of assembly, homodimer.

Its subcellular location is the secreted. Its function is as follows. Patterns the embryo by interrupting bone morphogenetic proteins (BMP) signaling. Binds BMP-4 and BMP-2 with high affinity. Can abolish BMP-4 activity by blocking binding to cognate cell-surface receptors. Capable of inducing dorsal development in embryos. Causes dorsal mesodermal differentiation of animal cap ectoderm when coexpressed with xWNT-8 and nuclear, sequence-specific DNA-binding protein xBRA. None of these molecules causes dorsal mesoderm formation when expressed alone. This chain is Noggin (nog), found in Xenopus laevis (African clawed frog).